Consider the following 190-residue polypeptide: Putative manganese efflux pump MntP (190 aa).

6 helical membrane passes run 3–23, 39–59, 65–85, 106–128, 133–155, and 157–177; these read PASI…AAVG, IGLI…FIGQ, VANW…LHMI, WLLA…GLAF, IWVA…VMLG, and AIGT…LIIV.

Belongs to the MntP (TC 9.B.29) family.

It is found in the cell inner membrane. Functionally, probably functions as a manganese efflux pump. The sequence is that of Putative manganese efflux pump MntP from Pseudomonas fluorescens (strain ATCC BAA-477 / NRRL B-23932 / Pf-5).